A 132-amino-acid polypeptide reads, in one-letter code: Interleukin-5 (132 aa).

An N-terminal signal peptide occupies residues 1-19 (MRMLLHLSILTLACVWTFA). N45, N74, and N88 each carry an N-linked (GlcNAc...) asparagine glycan.

This sequence belongs to the IL-5 family. As to quaternary structure, homodimer; disulfide-linked. Interacts with IL5RA. Interacts with CSF2RB.

It is found in the secreted. Functionally, homodimeric cytokine expressed predominantly by T-lymphocytes and NK cells that plays an important role in the survival, differentiation, and chemotaxis of eosinophils. Also acts on activated and resting B-cells to induce immunoglobulin production, growth, and differentiation. Mechanistically, exerts its biological effects through a receptor composed of IL5RA subunit and the cytokine receptor common subunit beta/CSF2RB. Binding to the receptor leads to activation of various kinases including LYN, SYK and JAK2 and thereby propagates signals through the RAS-MAPK and JAK-STAT5 pathways respectively. This Sigmodon hispidus (Hispid cotton rat) protein is Interleukin-5 (IL5).